The chain runs to 605 residues: Aspartate--tRNA(Asp/Asn) ligase (605 aa).

E186 provides a ligand contact to L-aspartate. The aspartate stretch occupies residues 210–213; it reads QQFK. Residues R232 and H460 each contribute to the L-aspartate site. An ATP-binding site is contributed by 232–234; the sequence is RDE. An ATP-binding site is contributed by E494. Position 501 (R501) interacts with L-aspartate. Residue 546–549 coordinates ATP; that stretch reads GLDR.

This sequence belongs to the class-II aminoacyl-tRNA synthetase family. Type 1 subfamily. Homodimer.

It localises to the cytoplasm. It carries out the reaction tRNA(Asx) + L-aspartate + ATP = L-aspartyl-tRNA(Asx) + AMP + diphosphate. Aspartyl-tRNA synthetase with relaxed tRNA specificity since it is able to aspartylate not only its cognate tRNA(Asp) but also tRNA(Asn). Reaction proceeds in two steps: L-aspartate is first activated by ATP to form Asp-AMP and then transferred to the acceptor end of tRNA(Asp/Asn). This Chlorobium chlorochromatii (strain CaD3) protein is Aspartate--tRNA(Asp/Asn) ligase.